The chain runs to 448 residues: MSVRFSSASRRLGSVRLSSAGAALGAGNACGVPGIGSGFSCAFGGSSLAGGLGMGGASCGAFTANEHGLLSGNEKVTMQNLNDRLASYLENVQALEEANADLEQKIKDWYEKFGPGSCRGLDHDYSRYFPIIDDLRTQIISATAHNANIILQNDNARLTADDFRMKYENELALHQSVDADINGLRRVLDELTLCRTDLEVQLETLSEELAYLKKNHEEEMQALQCAAGGNVNVEMNAAPGVDLTVLLNNMRAEYEALAEQNRRDAEAWFQEKSASLQQQISDDAGATTSARNELTEMKRTLQTLEIELQSLLAMKHSLECSLTETEGNYCTQLAQIQAQISALEEQLHQVRTETEGQKLEYEQLLNVKAHLEKEIETYCRLIDGDEGSCVKAKGQGRPGNQTKDSPKTAIVKTVVEELDPRGKVLSSRVHTLEEKSTKVNKTEQRIPS.

Positions 1-73 (MSVRFSSASR…ANEHGLLSGN (73 aa)) are head. Positions 74–109 (EKVTMQNLNDRLASYLENVQALEEANADLEQKIKDW) are coil 1A. Positions 74-389 (EKVTMQNLND…RLIDGDEGSC (316 aa)) constitute an IF rod domain. The interval 110–131 (YEKFGPGSCRGLDHDYSRYFPI) is linker 1. The coil 1B stretch occupies residues 132–223 (IDDLRTQIIS…KNHEEEMQAL (92 aa)). Residues 224–246 (QCAAGGNVNVEMNAAPGVDLTVL) are linker 12. Positions 247-385 (LNNMRAEYEA…ETYCRLIDGD (139 aa)) are coil 2. The tract at residues 386-448 (EGSCVKAKGQ…VNKTEQRIPS (63 aa)) is tail. The tract at residues 427–448 (SRVHTLEEKSTKVNKTEQRIPS) is disordered. Residues 430-448 (HTLEEKSTKVNKTEQRIPS) show a composition bias toward basic and acidic residues.

The protein belongs to the intermediate filament family. Heterotetramer of two type I and two type II keratins. Interacts with KRT6A to form filaments. In terms of tissue distribution, expressed in skin. Expressed in the Henle layer and cuticle of the irs in hair follicle bulb. In the hair follicle, expression was observed in all layers of the irs but was stronger in the Henle layer and cuticle than the Huxley layer until the Henle layer differentiated (at protein level).

Its subcellular location is the cytoplasm. Its function is as follows. Essential for the proper assembly of type I and type II keratin protein complexes and formation of keratin intermediate filaments in the inner root sheath (irs). The chain is Keratin, type I cytoskeletal 27 from Mus musculus (Mouse).